The primary structure comprises 265 residues: MEFLKRSFAPLTEKQWQEIDNRAREIFKTQLYGRKFVDVEGPYGWEYAAHPLGEVEVLSDENEVVKWGLRKSLPLIELRATFTLDLWELDNLERGKPNVDLSSLEETVRKVAEFEDEVIFRGCEKSGVKGLLSFEERKIECGSTPKDLLEAIVRALSIFSKDGIEGPYTLVINTDRWVSFLKEEAGHYPLEKRVEECLRGGKIITTPRIEDALVVSERGGDFKLILGQDLSIGYEDREKDAVRLFITETFTFQVVNPEALILLKF.

FMN contacts are provided by residues R79–T81 and W87. Positions E184–P189 are pore-forming loop. E235 lines the FMN pocket.

It belongs to the encapsulin family. Family 1 subfamily. This encapsulin nanocompartment is formed by 60 subunits; monomers form pentamers which assemble to form shells. There are 12 pores where the pentamers meet as well as 3-fold axis channels and dimer channels; none are larger than 3-4 Angstroms in diameter. The N-terminus of the protein is inside the shell, the C-terminus is outside. FMN is required as a cofactor.

It localises to the encapsulin nanocompartment. Its function is as follows. Shell component of a type 1 encapsulin nanocompartment. Assembles into proteinaceous shells 23-24 nm in diameter with 2-2.5 nm thick walls. Cargo protein Flp (ferritin-like protein, may store iron) is targeted to the interior via its C-terminal extension. The chain is Type 1 encapsulin shell protein from Thermotoga petrophila (strain ATCC BAA-488 / DSM 13995 / JCM 10881 / RKU-1).